A 569-amino-acid chain; its full sequence is Beta-galactoside-specific lectin 3 (569 aa).

Positions 1 to 33 (MNAVMDSRGAWVSCFLILGLVFGATVKAETKFS) are cleaved as a signal peptide. Glu198 is an active-site residue. Disulfide bonds link Cys280-Cys311, Cys327-Cys346, and Cys370-Cys387. Residues 288-307 (EVRYWPLVIRPVLENSGAVD) constitute a propeptide, connecting peptide. The region spanning 314–441 (SEPTVRIVGR…YSLGQGWLAG (128 aa)) is the Ricin B-type lectin 1 domain. 329–331 (DVR) lines the D-galactose pocket. Residues Asn402 and Asn442 are each glycosylated (N-linked (GlcNAc...) asparagine). The Ricin B-type lectin 2 domain occupies 445–568 (APREVTIYGF…GNPNQMWLPV (124 aa)). Disulfide bonds link Cys458-Cys471 and Cys497-Cys514. D-galactose is bound at residue 541–543 (DVA).

This sequence belongs to the ribosome-inactivating protein family. Type 2 RIP subfamily. Disulfide-linked dimer of A and B chains.

It carries out the reaction Endohydrolysis of the N-glycosidic bond at one specific adenosine on the 28S rRNA.. Its function is as follows. The A chain is responsible for inhibiting protein synthesis through the catalytic inactivation of 60S ribosomal subunits by removing adenine from position 4,324 of 28S rRNA. The B chain binds to cell receptors and probably facilitates the entry into the cell of the A chain; B chains are also responsible for cell agglutination (lectin activity). Inhibits growth of the human tumor cell line Molt4. This Viscum album (European mistletoe) protein is Beta-galactoside-specific lectin 3.